The primary structure comprises 97 residues: Co-chaperonin GroES (97 aa).

It belongs to the GroES chaperonin family. As to quaternary structure, heptamer of 7 subunits arranged in a ring. Interacts with the chaperonin GroEL.

The protein localises to the cytoplasm. Together with the chaperonin GroEL, plays an essential role in assisting protein folding. The GroEL-GroES system forms a nano-cage that allows encapsulation of the non-native substrate proteins and provides a physical environment optimized to promote and accelerate protein folding. GroES binds to the apical surface of the GroEL ring, thereby capping the opening of the GroEL channel. This chain is Co-chaperonin GroES, found in Klebsiella aerogenes (Enterobacter aerogenes).